The following is a 366-amino-acid chain: MLPLWARGGKPIVIPLPQKRHITLPALPILLLLLGTGFLLHSLFFPPPPPHPPGKYTSSPFLVKPSDFLAPPPPDRPSYIPEPLQPKKKGMLVPDAVHYVYGLKPVPEGKTGEELPYYAYLAMRSALINLKPKAIYFHYEHLPTGPWWDLIRPHLTLIKTQVPESIYGRPLKHFAHKADVLRLLAMKYSGGIYLDIDIYVTKPFDDLLYYPTTLGMEASPDSRRSALDPEGLCNAIIISQPNSLFIDRWLASYETFDGGIWAQHSVVKPWQLAREHPTEVQVLSERAFFWPMWHGDEIKKTHETNHHDFKASGQYAYHAWESLAMGYLSKLSPQSIRENENSFNKMVRPFIGPKDDETYKKWKRGH.

Topologically, residues 1–24 are extracellular; that stretch reads MLPLWARGGKPIVIPLPQKRHITL. A helical transmembrane segment spans residues 25–45; that stretch reads PALPILLLLLGTGFLLHSLFF. Over 46–366 the chain is Cytoplasmic; that stretch reads PPPPPHPPGK…ETYKKWKRGH (321 aa).

It belongs to the glycosyltransferase 32 family.

The protein resides in the cell membrane. In terms of biological role, plays a role in the localization of glycogen rosettes to the plasma membrane. Required for correct cell wall organization and may facilitate the connection between beta-1,3-glucan and beta-1,6-glucan in the cell wall. This is Glucan organizing enzyme 1 from Cryptococcus neoformans var. grubii serotype A (strain H99 / ATCC 208821 / CBS 10515 / FGSC 9487) (Filobasidiella neoformans var. grubii).